The primary structure comprises 209 residues: MSGKKRTASSNRWMLEHFDDHYVKLAQKRGLRSRAAFKLEELQQKDQLIRPGMTVVDLGAAPGGWSQVAVKLAGDKGKVIACDILPMDPIVGVDFLQGDFREEKVLEALLTRVGADKVDVVLSDMAPNMSGSDGVDQPRAMYLVELALDMCHQVLAPNGSFAVKVFQGEGFDEYMKAVKEAFKVVKTRKPDSSRARSREVYLVATGYKL.

S-adenosyl-L-methionine-binding residues include glycine 63, tryptophan 65, aspartate 83, aspartate 99, and aspartate 124. The active-site Proton acceptor is lysine 164.

The protein belongs to the class I-like SAM-binding methyltransferase superfamily. RNA methyltransferase RlmE family.

The protein localises to the cytoplasm. The catalysed reaction is uridine(2552) in 23S rRNA + S-adenosyl-L-methionine = 2'-O-methyluridine(2552) in 23S rRNA + S-adenosyl-L-homocysteine + H(+). Specifically methylates the uridine in position 2552 of 23S rRNA at the 2'-O position of the ribose in the fully assembled 50S ribosomal subunit. This Shewanella sp. (strain MR-7) protein is Ribosomal RNA large subunit methyltransferase E.